The primary structure comprises 186 residues: UPF0301 protein CV_3909 (186 aa).

This sequence belongs to the UPF0301 (AlgH) family.

The protein is UPF0301 protein CV_3909 of Chromobacterium violaceum (strain ATCC 12472 / DSM 30191 / JCM 1249 / CCUG 213 / NBRC 12614 / NCIMB 9131 / NCTC 9757 / MK).